The following is a 194-amino-acid chain: CASP-like protein 4C1 (194 aa).

Residues 1–35 lie on the Cytoplasmic side of the membrane; that stretch reads MRSPHAFRNGESPTLRDHTHFHSTVTAQKLRRFNS. A helical membrane pass occupies residues 36 to 56; that stretch reads LILLLRLASFSFSLASAVFML. At 57–74 the chain is on the extracellular side; the sequence is TNSRGSASPHWYDFDAFR. The chain crosses the membrane as a helical span at residues 75-95; the sequence is FVFVANAIVALYSVFEMGTCV. The Cytoplasmic portion of the chain corresponds to 96 to 114; that stretch reads WEFSRETTLWPEAFQVWFD. Residues 115-135 form a helical membrane-spanning segment; sequence FGHDQVFSYLLLSAGSAAAAL. The Extracellular portion of the chain corresponds to 136-157; it reads ARTMRGGDTCTANKAFCLQSDV. Residues 158 to 178 form a helical membrane-spanning segment; sequence AIGLGFAAFLFLAFSSCFSGF. Topologically, residues 179-194 are cytoplasmic; it reads RVACFLITGSRFHLYS.

It belongs to the Casparian strip membrane proteins (CASP) family. In terms of assembly, homodimer and heterodimers.

It localises to the cell membrane. The chain is CASP-like protein 4C1 from Arabidopsis thaliana (Mouse-ear cress).